Here is a 220-residue protein sequence, read N- to C-terminus: MSDRGGIFAGDDPFAIARSWLAEAERTEPNDANAMALATVDADGLPDARMVLLKDIEGGAADGSFVFYTNYESAKGVEIEATGVAAFVMHWKSLRRQIRVRGHVTRVEPELADAYYASRPLQSRIGAWASRQSRPLASRGALMAEVARLGISLGLNPSRPPHWGGYRIHPVQIEFWADGAFRLHDRFRWTKSSYQGENSALRDEGQEVPQSLWQVCRLSP.

Residues 49 to 54, 68 to 69, Lys-75, and Gln-97 contribute to the FMN site; these read RMVLLK and YT. Lys-54 contributes to the substrate binding site. Substrate contacts are provided by Tyr-115, Arg-119, and Ser-123. Residues 132 to 133 and Trp-176 contribute to the FMN site; that span reads QS. A substrate-binding site is contributed by 182 to 184; that stretch reads RLH. Arg-186 lines the FMN pocket.

It belongs to the pyridoxamine 5'-phosphate oxidase family. In terms of assembly, homodimer. Requires FMN as cofactor.

It catalyses the reaction pyridoxamine 5'-phosphate + O2 + H2O = pyridoxal 5'-phosphate + H2O2 + NH4(+). The enzyme catalyses pyridoxine 5'-phosphate + O2 = pyridoxal 5'-phosphate + H2O2. The protein operates within cofactor metabolism; pyridoxal 5'-phosphate salvage; pyridoxal 5'-phosphate from pyridoxamine 5'-phosphate: step 1/1. Its pathway is cofactor metabolism; pyridoxal 5'-phosphate salvage; pyridoxal 5'-phosphate from pyridoxine 5'-phosphate: step 1/1. Its function is as follows. Catalyzes the oxidation of either pyridoxine 5'-phosphate (PNP) or pyridoxamine 5'-phosphate (PMP) into pyridoxal 5'-phosphate (PLP). The sequence is that of Pyridoxine/pyridoxamine 5'-phosphate oxidase from Paracoccus denitrificans (strain Pd 1222).